A 190-amino-acid chain; its full sequence is Small ribosomal subunit protein uS7 (190 aa).

At T2 the chain carries N-acetylthreonine.

The protein belongs to the universal ribosomal protein uS7 family. As to quaternary structure, component of the small ribosomal subunit. Part of the small subunit (SSU) processome, composed of more than 70 proteins and the RNA chaperone small nucleolar RNA (snoRNA) U3.

The protein localises to the cytoplasm. It is found in the nucleus. The protein resides in the nucleolus. Component of the small ribosomal subunit. The ribosome is a large ribonucleoprotein complex responsible for the synthesis of proteins in the cell. Part of the small subunit (SSU) processome, first precursor of the small eukaryotic ribosomal subunit. During the assembly of the SSU processome in the nucleolus, many ribosome biogenesis factors, an RNA chaperone and ribosomal proteins associate with the nascent pre-rRNA and work in concert to generate RNA folding, modifications, rearrangements and cleavage as well as targeted degradation of pre-ribosomal RNA by the RNA exosome. This Dictyostelium discoideum (Social amoeba) protein is Small ribosomal subunit protein uS7 (rps5).